We begin with the raw amino-acid sequence, 383 residues long: Insulinoma-associated protein 1a (383 aa).

The SNAG domain stretch occupies residues 1–20 (MPRGFLVKRNKKATPVSYRV). 2 disordered regions span residues 99–141 (PVDL…AMRK) and 229–269 (RWHK…SEDG). Positions 105–120 (GTSNSNRTGTTVTTKR) are enriched in polar residues. The span at 130-140 (KPASKKAKAMR) shows a compositional bias: basic residues. The C2H2-type 1 zinc-finger motif lies at 209–231 (YRCPECDKLFSCPANLASHRRWH). Positions 244 to 256 (APEKEETSSDRDT) are enriched in basic and acidic residues. A C2H2-type 2; degenerate zinc finger spans residues 271-295 (YDCQHCGKKFKRQAYLKKHVTAHHD). C2H2-type zinc fingers lie at residues 314 to 337 (HLCP…RLQH) and 342 to 365 (YPCK…NKCH).

Belongs to the INSM1 family.

The protein resides in the nucleus. In terms of biological role, may act as a transcriptional regulator. May play a role in neurogenesis and neuroendocrine cell differentiation during embryonic development. This chain is Insulinoma-associated protein 1a (insm1a), found in Danio rerio (Zebrafish).